A 494-amino-acid chain; its full sequence is UDP-N-acetylmuramate--L-alanine ligase (494 aa).

134 to 140 (GSHGKTT) is an ATP binding site.

It belongs to the MurCDEF family.

It localises to the cytoplasm. The catalysed reaction is UDP-N-acetyl-alpha-D-muramate + L-alanine + ATP = UDP-N-acetyl-alpha-D-muramoyl-L-alanine + ADP + phosphate + H(+). Its pathway is cell wall biogenesis; peptidoglycan biosynthesis. Functionally, cell wall formation. The polypeptide is UDP-N-acetylmuramate--L-alanine ligase (Prochlorococcus marinus (strain NATL1A)).